The sequence spans 235 residues: 6-carboxyhexanoate--CoA ligase (235 aa).

This sequence belongs to the BioW family. As to quaternary structure, homodimer. Mg(2+) serves as cofactor.

It catalyses the reaction heptanedioate + ATP + CoA = 6-carboxyhexanoyl-CoA + AMP + diphosphate. The protein operates within metabolic intermediate metabolism; pimeloyl-CoA biosynthesis; pimeloyl-CoA from pimelate: step 1/1. Functionally, catalyzes the transformation of pimelate into pimeloyl-CoA with concomitant hydrolysis of ATP to AMP. The sequence is that of 6-carboxyhexanoate--CoA ligase from Desulfovibrio desulfuricans (strain ATCC 27774 / DSM 6949 / MB).